The sequence spans 477 residues: Glycogen synthase (477 aa).

ADP-alpha-D-glucose is bound at residue lysine 15.

The protein belongs to the glycosyltransferase 1 family. Bacterial/plant glycogen synthase subfamily.

It catalyses the reaction [(1-&gt;4)-alpha-D-glucosyl](n) + ADP-alpha-D-glucose = [(1-&gt;4)-alpha-D-glucosyl](n+1) + ADP + H(+). It participates in glycan biosynthesis; glycogen biosynthesis. Functionally, synthesizes alpha-1,4-glucan chains using ADP-glucose. This Klebsiella pneumoniae subsp. pneumoniae (strain ATCC 700721 / MGH 78578) protein is Glycogen synthase.